The sequence spans 381 residues: Flap endonuclease 1 (381 aa).

The segment at 1-105 (MGIKGLNSII…HELDKRTSRR (105 aa)) is N-domain. Aspartate 34 contacts Mg(2+). Residues arginine 47 and arginine 71 each coordinate DNA. Residues aspartate 87, glutamate 156, glutamate 158, aspartate 177, and aspartate 179 each coordinate Mg(2+). The interval 120–251 (EKMKHERRLV…VTALKLMKEH (132 aa)) is I-domain. Residue glutamate 156 coordinates DNA. DNA-binding residues include glycine 229 and aspartate 231. Aspartate 231 provides a ligand contact to Mg(2+). The tract at residues 338–346 (VQGRLDGFF) is interaction with PCNA.

This sequence belongs to the XPG/RAD2 endonuclease family. FEN1 subfamily. As to quaternary structure, interacts with PCNA. Three molecules of FEN1 bind to one PCNA trimer with each molecule binding to one PCNA monomer. PCNA stimulates the nuclease activity without altering cleavage specificity. The cofactor is Mg(2+). In terms of processing, phosphorylated. Phosphorylation upon DNA damage induces relocalization to the nuclear plasma.

The protein resides in the nucleus. It is found in the nucleolus. It localises to the nucleoplasm. The protein localises to the mitochondrion. Structure-specific nuclease with 5'-flap endonuclease and 5'-3' exonuclease activities involved in DNA replication and repair. During DNA replication, cleaves the 5'-overhanging flap structure that is generated by displacement synthesis when DNA polymerase encounters the 5'-end of a downstream Okazaki fragment. It enters the flap from the 5'-end and then tracks to cleave the flap base, leaving a nick for ligation. Also involved in the long patch base excision repair (LP-BER) pathway, by cleaving within the apurinic/apyrimidinic (AP) site-terminated flap. Acts as a genome stabilization factor that prevents flaps from equilibrating into structures that lead to duplications and deletions. Also possesses 5'-3' exonuclease activity on nicked or gapped double-stranded DNA, and exhibits RNase H activity. Also involved in replication and repair of rDNA and in repairing mitochondrial DNA. The sequence is that of Flap endonuclease 1 from Candida glabrata (strain ATCC 2001 / BCRC 20586 / JCM 3761 / NBRC 0622 / NRRL Y-65 / CBS 138) (Yeast).